The primary structure comprises 343 residues: Phosphate acyltransferase (343 aa).

It belongs to the PlsX family. As to quaternary structure, homodimer. Probably interacts with PlsY.

It is found in the cytoplasm. It carries out the reaction a fatty acyl-[ACP] + phosphate = an acyl phosphate + holo-[ACP]. It participates in lipid metabolism; phospholipid metabolism. Catalyzes the reversible formation of acyl-phosphate (acyl-PO(4)) from acyl-[acyl-carrier-protein] (acyl-ACP). This enzyme utilizes acyl-ACP as fatty acyl donor, but not acyl-CoA. The polypeptide is Phosphate acyltransferase (Coxiella burnetii (strain CbuG_Q212) (Coxiella burnetii (strain Q212))).